The chain runs to 308 residues: Ribosomal RNA large subunit methyltransferase F (308 aa).

The protein belongs to the methyltransferase superfamily. METTL16/RlmF family.

It localises to the cytoplasm. It carries out the reaction adenosine(1618) in 23S rRNA + S-adenosyl-L-methionine = N(6)-methyladenosine(1618) in 23S rRNA + S-adenosyl-L-homocysteine + H(+). In terms of biological role, specifically methylates the adenine in position 1618 of 23S rRNA. In Salmonella dublin (strain CT_02021853), this protein is Ribosomal RNA large subunit methyltransferase F.